Here is a 33-residue protein sequence, read N- to C-terminus: Cyanophlyctin-beta (33 aa).

The cysteines at positions 27 and 33 are disulfide-linked.

As to expression, expressed by the skin glands.

It is found in the secreted. In terms of biological role, antimicrobial peptide active against E.coli (MIC=5 uM), K.pneumoniae (MIC=10 uM), B.cereus (MIC=7 uM) and S.aureus (MIC=12 uM). Has very little hemolytic activity. The chain is Cyanophlyctin-beta from Euphlyctis cyanophlyctis (Skittering frog).